Reading from the N-terminus, the 180-residue chain is Translation initiation factor IF-3 (180 aa).

This sequence belongs to the IF-3 family. Monomer.

It localises to the cytoplasm. In terms of biological role, IF-3 binds to the 30S ribosomal subunit and shifts the equilibrium between 70S ribosomes and their 50S and 30S subunits in favor of the free subunits, thus enhancing the availability of 30S subunits on which protein synthesis initiation begins. This chain is Translation initiation factor IF-3, found in Hyphomonas neptunium (strain ATCC 15444).